The following is a 1165-amino-acid chain: Peroxisomal ATPase PEX6 (1165 aa).

Belongs to the AAA ATPase family. As to quaternary structure, interacts with PEX1; forming the PEX1-PEX6 AAA ATPase complex, which is composed of a heterohexamer formed by a trimer of PEX1-PEX6 dimers.

The protein localises to the membrane. It catalyses the reaction ATP + H2O = ADP + phosphate + H(+). Component of the PEX1-PEX6 AAA ATPase complex involved in peroxisome biosynthesis. The complex acts as a protein dislocase complex that mediates the ATP-dependent extraction of the PEX5 receptor from peroxisomal membranes, an essential step for PEX5 recycling. Specifically recognizes PEX5 monoubiquitinated at 'Cys-6', and pulls it out of the peroxisome lumen through the PEX2-PEX10-PEX12 retrotranslocation channel. Extraction by the PEX1-PEX6 AAA ATPase complex is accompanied by unfolding of the TPR repeats and release of bound cargo from PEX5. This chain is Peroxisomal ATPase PEX6, found in Komagataella pastoris (Yeast).